A 227-amino-acid chain; its full sequence is 2,3-bisphosphoglycerate-dependent phosphoglycerate mutase (227 aa).

Substrate contacts are provided by residues 8–15 (RHGQSIWN), 21–22 (TG), arginine 58, 110–113 (ERYY), lysine 121, 137–138 (RR), and 181–182 (GN). The Tele-phosphohistidine intermediate role is filled by histidine 9. The Proton donor/acceptor role is filled by glutamate 110.

The protein belongs to the phosphoglycerate mutase family. BPG-dependent PGAM subfamily. As to quaternary structure, homodimer.

The catalysed reaction is (2R)-2-phosphoglycerate = (2R)-3-phosphoglycerate. The protein operates within carbohydrate degradation; glycolysis; pyruvate from D-glyceraldehyde 3-phosphate: step 3/5. Functionally, catalyzes the interconversion of 2-phosphoglycerate and 3-phosphoglycerate. The chain is 2,3-bisphosphoglycerate-dependent phosphoglycerate mutase from Pseudoalteromonas atlantica (strain T6c / ATCC BAA-1087).